Reading from the N-terminus, the 521-residue chain is Importin subunit alpha-4 (521 aa).

A disordered region spans residues 1–29 (MAENPSLENHRIKSFKNKGRDVETMRRHR). A2 carries the N-acetylalanine modification. Residues 2 to 58 (AENPSLENHRIKSFKNKGRDVETMRRHRNEVTVELRKNKRDEHLLKKRNVPQEESLE) enclose the IBB domain. Basic and acidic residues predominate over residues 18–29 (KGRDVETMRRHR). Residues 43 to 52 (EHLLKKRNVP) carry the Nuclear localization signal motif. A phosphoserine mark is found at S56 and S60. The stretch at 66–106 (FKAQNVTLEAILQNATSDNPVVQLSAVQAARKLLSSDRNPP) is one ARM 1; truncated repeat. 8 ARM repeats span residues 107-149 (IDDL…TSAQ), 150-194 (TQAV…CRDY), 195-233 (VISL…NKDP), 234-278 (PPPM…EQIQ), 279-318 (MVID…TDEQ), 319-360 (TQVV…NQQQ), 361-400 (VQAV…ISGR), and 401-443 (KDQV…IMAG). The segment at 137–229 (WALTNIASGT…VTWVIVNLCR (93 aa)) is NLS binding site (major). The tract at residues 306–394 (RAVGNIVTGT…QKEAAWAISN (89 aa)) is NLS binding site (minor). The ARM 10; atypical repeat unit spans residues 447 to 485 (STIAEIIEECGGLEKIEVLQQHENEDIYKLAFEIIDQYF). Y484 bears the Phosphotyrosine mark.

Belongs to the importin alpha family. In terms of assembly, forms a complex with importin subunit beta-1. Interacts with DDX21. Interacts with NCBP1, NCBP2/CBP20 and NCBP3. Interacts with RCC1. Interacts with ZC3H11A. (Microbial infection) Interacts with HIV-1 integrase; this interaction might play a role in nuclear import of HIV pre-integration complex. As to quaternary structure, (Microbial infection) Interacts with influenza virus nucleoprotein; this interaction might play a role in nuclear import of viral genome. Ubiquitous. Highest levels in heart and skeletal muscle.

The protein resides in the cytoplasm. It localises to the nucleus. Functionally, functions in nuclear protein import as an adapter protein for nuclear receptor KPNB1. Binds specifically and directly to substrates containing either a simple or bipartite NLS motif. Docking of the importin/substrate complex to the nuclear pore complex (NPC) is mediated by KPNB1 through binding to nucleoporin FxFG repeats and the complex is subsequently translocated through the pore by an energy requiring, Ran-dependent mechanism. At the nucleoplasmic side of the NPC, Ran binds to importin-beta and the three components separate and importin-alpha and -beta are re-exported from the nucleus to the cytoplasm where GTP hydrolysis releases Ran from importin. The directionality of nuclear import is thought to be conferred by an asymmetric distribution of the GTP- and GDP-bound forms of Ran between the cytoplasm and nucleus. In vitro, mediates the nuclear import of human cytomegalovirus UL84 by recognizing a non-classical NLS. Recognizes NLSs of influenza A virus nucleoprotein probably through ARM repeats 7-9. The polypeptide is Importin subunit alpha-4 (KPNA3) (Homo sapiens (Human)).